Consider the following 150-residue polypeptide: Classical arabinogalactan protein 6 (150 aa).

The signal sequence occupies residues 1 to 20 (MARQFVVLVLLTLTIATAFA). Low complexity-rich tracts occupy residues 19 to 75 (FAAD…SPAA) and 85 to 98 (SASSPSDSAEAPTV). The segment at 19–131 (FAADAPSASP…ESPKSGAVTT (113 aa)) is disordered. The GPI-anchor amidated serine moiety is linked to residue Ser126. Positions 127-150 (GAVTTAKFSVVGTVATVGFFFFSF) are cleaved as a propeptide — removed in mature form.

Belongs to the classical AGP family. O-glycosylated on the hydroxyproline residues. Expressed in the anthers.

The protein localises to the cell membrane. In terms of biological role, proteoglycan that seems to be implicated in diverse developmental roles such as differentiation, cell-cell recognition, embryogenesis and programmed cell death. Plays an important role during the formation of the nexine layer of the pollen wall. The sequence is that of Classical arabinogalactan protein 6 (AGP6) from Arabidopsis thaliana (Mouse-ear cress).